The primary structure comprises 253 residues: Uridylate kinase (253 aa).

Residue lysine 26 to glycine 29 participates in ATP binding. Glycine 68 contacts UMP. The ATP site is built by glycine 69 and arginine 73. UMP contacts are provided by residues aspartate 88 and threonine 149 to threonine 156. ATP-binding residues include threonine 176, tyrosine 182, and aspartate 185.

This sequence belongs to the UMP kinase family. As to quaternary structure, homohexamer.

It is found in the cytoplasm. It carries out the reaction UMP + ATP = UDP + ADP. Its pathway is pyrimidine metabolism; CTP biosynthesis via de novo pathway; UDP from UMP (UMPK route): step 1/1. Inhibited by UTP. Its function is as follows. Catalyzes the reversible phosphorylation of UMP to UDP. The protein is Uridylate kinase of Chromohalobacter salexigens (strain ATCC BAA-138 / DSM 3043 / CIP 106854 / NCIMB 13768 / 1H11).